The primary structure comprises 461 residues: ATP synthase subunit beta (461 aa).

151 to 158 (GGAGVGKT) contacts ATP.

This sequence belongs to the ATPase alpha/beta chains family. In terms of assembly, F-type ATPases have 2 components, CF(1) - the catalytic core - and CF(0) - the membrane proton channel. CF(1) has five subunits: alpha(3), beta(3), gamma(1), delta(1), epsilon(1). CF(0) has three main subunits: a(1), b(2) and c(9-12). The alpha and beta chains form an alternating ring which encloses part of the gamma chain. CF(1) is attached to CF(0) by a central stalk formed by the gamma and epsilon chains, while a peripheral stalk is formed by the delta and b chains.

The protein resides in the cell inner membrane. It catalyses the reaction ATP + H2O + 4 H(+)(in) = ADP + phosphate + 5 H(+)(out). In terms of biological role, produces ATP from ADP in the presence of a proton gradient across the membrane. The catalytic sites are hosted primarily by the beta subunits. The chain is ATP synthase subunit beta from Pseudoalteromonas translucida (strain TAC 125).